A 667-amino-acid polypeptide reads, in one-letter code: Bicarbonate transport ATP-binding protein CmpC (667 aa).

The ABC transporter domain maps to Val5–Glu239. Gly42–Ser49 is an ATP binding site. The cmpA-like stretch occupies residues Leu281–Ala667.

Belongs to the ABC transporter superfamily. Nitrate/nitrite/cyanate uptake transporter (NitT) (TC 3.A.1.16) family. In terms of assembly, the complex is composed of two ATP-binding proteins (CmpC and CmpD), a transmembrane protein (CmpB) and a solute-binding protein (CmpA).

It is found in the cell inner membrane. In terms of biological role, part of the ABC transporter complex CmpABCD involved in bicarbonate transport. Responsible for energy coupling to the transport system. In Synechocystis sp. (strain ATCC 27184 / PCC 6803 / Kazusa), this protein is Bicarbonate transport ATP-binding protein CmpC (cmpC).